The sequence spans 520 residues: Nonsense-mediated mRNA decay factor SMG9 (520 aa).

The interval 1 to 143 is disordered; sequence MSESGHSQPG…KGEKEGQRPT (143 aa). The residue at position 2 (S2) is an N-acetylserine. Residues S2, S4, S7, S32, and S53 each carry the phosphoserine modification. Over residues 36-53 the composition is skewed to basic and acidic residues; sequence GRERDYIAPWERERRDGS. Pro residues-rich tracts occupy residues 78–94 and 122–133; these read QPPPSTAPAAPPAPAPL and TAPPPPTAPAPP. A Phosphoserine modification is found at S451.

The protein belongs to the SMG9 family. In terms of assembly, self-associates to form homodimers and forms heterodimers with SMG8; these assembly forms may represent SMG1C intermediate forms. Component of the SMG1C complex composed of SMG1, SMG8 and SMG9. Interacts with DHX34; the interaction is RNA-independent. Post-translationally, phosphorylated by SMG1.

Functionally, involved in nonsense-mediated decay (NMD) of mRNAs containing premature stop codons. Is recruited by release factors to stalled ribosomes together with SMG1 and SMG8 (forming the SMG1C protein kinase complex) and, in the SMG1C complex, is required for the efficient association between SMG1 and SMG8. Plays a role in brain, heart, and eye development. This chain is Nonsense-mediated mRNA decay factor SMG9, found in Mus musculus (Mouse).